A 1203-amino-acid polypeptide reads, in one-letter code: Delphilin (1203 aa).

Residues 1 to 79 (MPATNQGWPE…VPPSLGVLPG (79 aa)) enclose the PDZ 1 domain. The S-palmitoyl cysteine moiety is linked to residue alanine 3. The disordered stretch occupies residues 215 to 270 (GAQRLRRSRSEERPERLLVSTRASAAPRRPDEPPPRKATSLLGGRTGPGGPRRTVR). The segment covering 231–241 (LLVSTRASAAP) has biased composition (low complexity). A PDZ 2 domain is found at 268–345 (TVRVYKGNKS…MPTLVVEEGP (78 aa)). Position 303 is a phosphoserine (serine 303). Disordered regions lie at residues 466-541 (ESSL…TPNP), 563-586 (IGTM…GPRT), 611-656 (LASP…PPSR), and 710-821 (SFVT…SHMS). Residues 500–509 (RSQGLETSLS) are compositionally biased toward polar residues. 4 positions are modified to phosphoserine: serine 572, serine 613, serine 644, and serine 647. Low complexity predominate over residues 611 to 625 (LASPSSSESHPYASL). Residues 715–740 (ERSSASECVSSSEEGSSLTYSSISDH) are compositionally biased toward low complexity. The span at 741–756 (IPPPPLSPPPPPPLPF) shows a compositional bias: pro residues. A compositionally biased stretch (polar residues) spans 774-784 (QSLTKPLTQIN). Positions 786-803 (PVPPPPPPPLPPPVPCAP) are enriched in pro residues. The FH2 domain occupies 812–1203 (HRRSETSHMS…SSGMVSPLAW (392 aa)).

As to quaternary structure, interacts with C-terminus of the glutamate receptor GRID2 via PDZ domain. Isoform 2 also interacts with Profilin-2/PFN2 and with the monocarboxylate transporter SLC16A7 via PDZ domain. The interaction of isoform 2 with GRID2 is dependent on GRID2 phosphorylation by PKA. Post-translationally, isoform 2 is palmitoylated. Palmitoylation of isoform 2 is necessary for the enhanced cell surface expression of GRID2, and is also responsible for the accumulation of isoform 2 within dendritic spines. Isoform 1 and isoform 2 are differentially localized, probably modulating GRID2 signaling in neurons. In terms of tissue distribution, isoform 1 is expressed in the cerebellum, but not in the cerebral cortex. Isoform 2 is expressed in the cell body of purkinge cells of the cerebellum and weakly expressed in the cerebrum and the brainstem as well as various nuclei of the thalamus. Isoform 2 is highly expressed in the cerebral cortex than in the cerebellum. Isoform 3 is expressed in the cerebellum and cerebrum.

It localises to the postsynaptic cell membrane. Its subcellular location is the cell projection. The protein localises to the dendritic spine. It is found in the synapse. The protein resides in the cell membrane. In terms of biological role, postsynaptic scaffolding protein at the Purkinje cell synapse, where it may serve to link GRID2 with actin cytoskeleton and various signaling molecules. In Mus musculus (Mouse), this protein is Delphilin (Grid2ip).